The primary structure comprises 389 residues: Naringenin-chalcone synthase (389 aa).

C164 is a catalytic residue.

This sequence belongs to the thiolase-like superfamily. Chalcone/stilbene synthases family. As to expression, expressed in glandular trichomes. Detected at low levels in female flowers, stems, seeds, leaves and roots.

The protein resides in the cytoplasm. The enzyme catalyses (E)-4-coumaroyl-CoA + 3 malonyl-CoA + 3 H(+) = 2',4,4',6'-tetrahydroxychalcone + 3 CO2 + 4 CoA. In terms of biological role, chalcone synthase that can also use isovaleryl-CoA, isobutyryl-CoA or hexanoyl-CoA as substrates, but that is unable to produce olivetol or olivetolic acid. The sequence is that of Naringenin-chalcone synthase (CHS) from Cannabis sativa (Hemp).